The following is a 127-amino-acid chain: Large ribosomal subunit protein bL17 (127 aa).

Belongs to the bacterial ribosomal protein bL17 family. Part of the 50S ribosomal subunit. Contacts protein L32.

This is Large ribosomal subunit protein bL17 from Lactobacillus helveticus (strain DPC 4571).